The sequence spans 328 residues: Biotin synthase (328 aa).

The 226-residue stretch at 42–267 (YHVQLASLLS…LMPGSRVRLS (226 aa)) folds into the Radical SAM core domain. Residues Cys57, Cys61, and Cys64 each coordinate [4Fe-4S] cluster. Positions 101, 133, 193, and 265 each coordinate [2Fe-2S] cluster.

Belongs to the radical SAM superfamily. Biotin synthase family. Homodimer. [4Fe-4S] cluster is required as a cofactor. Requires [2Fe-2S] cluster as cofactor.

The catalysed reaction is (4R,5S)-dethiobiotin + (sulfur carrier)-SH + 2 reduced [2Fe-2S]-[ferredoxin] + 2 S-adenosyl-L-methionine = (sulfur carrier)-H + biotin + 2 5'-deoxyadenosine + 2 L-methionine + 2 oxidized [2Fe-2S]-[ferredoxin]. Its pathway is cofactor biosynthesis; biotin biosynthesis; biotin from 7,8-diaminononanoate: step 2/2. Functionally, catalyzes the conversion of dethiobiotin (DTB) to biotin by the insertion of a sulfur atom into dethiobiotin via a radical-based mechanism. This chain is Biotin synthase, found in Synechococcus sp. (strain CC9311).